The sequence spans 508 residues: Lysine--tRNA ligase (508 aa).

Glutamate 418 and glutamate 425 together coordinate Mg(2+).

It belongs to the class-II aminoacyl-tRNA synthetase family. Homodimer. Mg(2+) serves as cofactor.

The protein resides in the cytoplasm. It catalyses the reaction tRNA(Lys) + L-lysine + ATP = L-lysyl-tRNA(Lys) + AMP + diphosphate. This is Lysine--tRNA ligase from Burkholderia pseudomallei (strain 1710b).